The primary structure comprises 266 residues: Type III pantothenate kinase (266 aa).

9–16 (DAGNSRIK) lines the ATP pocket. Substrate-binding positions include tyrosine 96 and 103–106 (GSDR). Aspartate 105 (proton acceptor) is an active-site residue. Threonine 129 serves as a coordination point for ATP. Threonine 189 lines the substrate pocket.

This sequence belongs to the type III pantothenate kinase family. Homodimer. It depends on NH4(+) as a cofactor. The cofactor is K(+).

The protein localises to the cytoplasm. It catalyses the reaction (R)-pantothenate + ATP = (R)-4'-phosphopantothenate + ADP + H(+). It participates in cofactor biosynthesis; coenzyme A biosynthesis; CoA from (R)-pantothenate: step 1/5. Catalyzes the phosphorylation of pantothenate (Pan), the first step in CoA biosynthesis. This chain is Type III pantothenate kinase, found in Burkholderia cenocepacia (strain ATCC BAA-245 / DSM 16553 / LMG 16656 / NCTC 13227 / J2315 / CF5610) (Burkholderia cepacia (strain J2315)).